A 159-amino-acid chain; its full sequence is MNRVLYPGTFDPITKGHGDLVERASRLFDHVIIAVAASPKKNPLFPLEQRVELAREVTKHLPNVEVIGFSSLLAHFAKEQGANVFLRGLRAVSDFEYEFQLANMNRQLAPDVESLFLTPSERYSFISSTLVREIAALGGDISKFVHPVVADALTERFKK.

Substrate is bound at residue Thr-9. ATP contacts are provided by residues 9–10 (TF) and His-17. Lys-41, Leu-73, and Arg-87 together coordinate substrate. Residues 88–90 (GLR), Glu-98, and 123–129 (YSFISST) each bind ATP.

This sequence belongs to the bacterial CoaD family. In terms of assembly, homohexamer. Mg(2+) serves as cofactor.

It localises to the cytoplasm. The enzyme catalyses (R)-4'-phosphopantetheine + ATP + H(+) = 3'-dephospho-CoA + diphosphate. The protein operates within cofactor biosynthesis; coenzyme A biosynthesis; CoA from (R)-pantothenate: step 4/5. Reversibly transfers an adenylyl group from ATP to 4'-phosphopantetheine, yielding dephospho-CoA (dPCoA) and pyrophosphate. The sequence is that of Phosphopantetheine adenylyltransferase from Pseudomonas putida (strain ATCC 700007 / DSM 6899 / JCM 31910 / BCRC 17059 / LMG 24140 / F1).